A 421-amino-acid chain; its full sequence is MQLLNFGLLLLPFVAGDLAPQPEPLLAGPSDVVPGQYIVTLKEGLTSAQIRDHKKWVSSVHRANLEGFAAGASGVETEGIMKHFHIHDLNMYSGGFDEKTVEDLSRNPYVKSVHPDQHVYLAKTVTQRQARWGLGYMSSKGKPVPLHSTLVDYSYDDKAGEGVWAYVLDTGINVNHVEFEGRAILGHNAIPNKPHTDEFGHGTYVAGIIAGKTYGVAKKANVVSAKAFDTGSSTYNYILETYDWIVRNITDSNRKNKAVINLSISGAKYQPFDDAVEKAFKAGIATVVAAGNDGKDAKNNTPASSPNAITVGAVRWENTRPSFSNYGKIVDIWAPGELIKSCWKGGNNATSTQSGTSAASPHVAGLVAYLMSTENLPSPSAVTARVLNLTIPNLVKDAKDSPNRVVYNGIQERKFTLPKYF.

Residues 1–16 (MQLLNFGLLLLPFVAG) form the signal peptide. The propeptide occupies 17–122 (DLAPQPEPLL…VHPDQHVYLA (106 aa)). Residues 36–122 (QYIVTLKEGL…VHPDQHVYLA (87 aa)) enclose the Inhibitor I9 domain. The Peptidase S8 domain maps to 131-421 (RWGLGYMSSK…ERKFTLPKYF (291 aa)). Catalysis depends on charge relay system residues aspartate 169 and histidine 201. N-linked (GlcNAc...) asparagine glycans are attached at residues asparagine 248, asparagine 261, and asparagine 348. Serine 357 acts as the Charge relay system in catalysis. N-linked (GlcNAc...) asparagine glycosylation occurs at asparagine 388.

Belongs to the peptidase S8 family.

The protein resides in the secreted. Functionally, secreted subtilisin-like serine protease with keratinolytic activity that contributes to pathogenicity. In Trichophyton equinum (Horse ringworm fungus), this protein is Subtilisin-like protease 2 (SUB2).